The following is a 690-amino-acid chain: Crooked neck-like protein 1 (690 aa).

HAT repeat units follow at residues 61 to 93 (DYKL…WEES), 95 to 127 (KEIQ…MEMK), 129 to 161 (RQVN…MEEM), 163 to 194 (GNVA…FELR), 196 to 227 (KEVE…FEEK), 229 to 264 (AYFA…FEEN), 266 to 300 (KEFE…FEKK), 310 to 342 (IIVS…LVES), 344 to 378 (AEAD…LWVN), 388 to 424 (KDPE…FEIR), 459 to 491 (REFD…LETI), 493 to 527 (GDIE…FEIE), 529 to 560 (EETE…FELS), 565 to 606 (GSVA…EFGT), 608 to 646 (SDKE…YIFP), and 648 to 673 (DAAN…EREA). The interval 250–467 (MDEHLYVAFA…LREFDRCRKL (218 aa)) is mediates interaction with HSP90. The residue at position 342 (Ser342) is a Phosphoserine. The Nuclear localization signal motif lies at 618 to 626 (PEKVKKRRK). The span at 667–679 (QQQEREAAEQDPD) shows a compositional bias: basic and acidic residues. The disordered stretch occupies residues 667–690 (QQQEREAAEQDPDKDIDESESSSF). A compositionally biased stretch (acidic residues) spans 680–690 (KDIDESESSSF). At Ser689 the chain carries Phosphoserine.

It belongs to the crooked-neck family. In terms of assembly, identified in the spliceosome C complex. Present in a spliceosome complex assembled in vitro containing CRNKL1, HPRP8BP and SNRPB2. Component of the minor spliceosome, which splices U12-type introns. Interacts with PPIL2 (via the PPIase cyclophilin-type domain); they may form a trimeric complex with HSP90.

The protein resides in the nucleus. It is found in the nucleus speckle. Its function is as follows. Involved in pre-mRNA splicing process. As a component of the minor spliceosome, involved in the splicing of U12-type introns in pre-mRNAs. The polypeptide is Crooked neck-like protein 1 (Crnkl1) (Mus musculus (Mouse)).